The primary structure comprises 1025 residues: MKFFALFIYRPVATILLSVAITLCGILGFRMLPVAPLPQVDFPVIMVSASLPGASPETMASSVATPLERSLGRIAGVSEMTSSSSLGSTRIILQFDFDRDINGAARDVQAAINAAQSLLPSGMPSRPTYRKANPSDAPIMILTLTSDTYSQGELYDFASTQLAPTISQIDGVGDVDVGGSSLPAVRVGLNPQALFNQGVSLDDVRTAISNANVRKPQGALEDGTHRWQIQTNDELKTAAEYQPLIIHYNNGGAVRLGDVATVTDSVQDVRNAGMTNAKPAILLMIRKLPEANIIQTVDSIRARLPELQSTIPAAIDLQIAQDRSPTIRASLEEVEQTLIISVALVILVVFLFLRSGRATIIPAVAVPVSLIGTFAAMYLCGFSLNNLSLMALTIATGFVVDDAIVVLENIARHLEAGMKPLQAALQGTREVGFTVLSMSLSLVAVFLPLLLMGGLPGRLLREFAVTLSVAIGISLLVSLTLTPMMCGWMLKASKPREQKRLRGFGRMLVALQQGYGKSLKWVLNHTRLVGVVLLGTIALNIWLYISIPKTFFPEQDTGVLMGGIQADQSISFQAMRGKLQDFMKIIRDDPAVDNVTGFTGGSRVNSGMMFITLKPRGERSETAQQIIDRLRKKLAKEPGANLFLMAVQDIRVGGRQANASYQYTLLSDDLAALREWEPKIRKKLATLPELADVNSDQEDNGAEMNLIYDRDTMARLGIDVQAANSLLNNAFGQRQISTIYQPMNQYKVVMEVDPRYTQDISALEKMFVINNEGKAIPLSYFAKWQPANAPLSVNHQGLSAASTISFNLPTGKSLSDASAAIDRAMTQLGVPSTVRGSFAGTAQVFQETMNSQVILIIAAIATVYIVLGILYESYVHPLTILSTLPSAGVGALLALQLFNAPFSLIALIGIMLLIGIVKKNAIMMVDFALEAQRHGNLTPQEAIFQACLLRFRPIMMTTLAALFGALPLVLSGGDGSELRQPLGITIVGGLVMSQLLTLYTTPVVYLFFDRLRLRFSRKPKQAVTE.

Transmembrane regions (helical) follow at residues 3–23, 333–353, 360–380, 387–407, 431–451, 463–483, 528–548, 853–873, 875–895, 897–917, 953–973, and 984–1004; these read FFALFIYRPVATILLSVAITL, EVEQTLIISVALVILVVFLFL, IIPAVAVPVSLIGTFAAMYLC, LSLMALTIATGFVVDDAIVVL, VGFTVLSMSLSLVAVFLPLLL, FAVTLSVAIGISLLVSLTLTP, LVGVVLLGTIALNIWLYISIP, VILIIAAIATVYIVLGILYES, VHPLTILSTLPSAGVGALLAL, LFNAPFSLIALIGIMLLIGIV, PIMMTTLAALFGALPLVLSGG, and ITIVGGLVMSQLLTLYTTPVV.

Belongs to the resistance-nodulation-cell division (RND) (TC 2.A.6) family. MdtC subfamily. As to quaternary structure, part of a tripartite efflux system composed of MdtA, MdtB and MdtC. MdtC forms a heteromultimer with MdtB.

Its subcellular location is the cell inner membrane. The MdtABC tripartite complex confers resistance against novobiocin and deoxycholate. This is Multidrug resistance protein MdtC from Escherichia coli (strain UTI89 / UPEC).